Consider the following 218-residue polypeptide: Cytochrome c biogenesis ATP-binding export protein CcmA (218 aa).

The ABC transporter domain maps to 2-217 (LEAKNLTCIR…KSCLSACCAV (216 aa)). Residue 34–41 (GPNGAGKT) coordinates ATP.

This sequence belongs to the ABC transporter superfamily. CcmA exporter (TC 3.A.1.107) family. The complex is composed of two ATP-binding proteins (CcmA) and two transmembrane proteins (CcmB).

The protein resides in the cell inner membrane. The catalysed reaction is heme b(in) + ATP + H2O = heme b(out) + ADP + phosphate + H(+). In terms of biological role, part of the ABC transporter complex CcmAB involved in the biogenesis of c-type cytochromes; once thought to export heme, this seems not to be the case, but its exact role is uncertain. Responsible for energy coupling to the transport system. The protein is Cytochrome c biogenesis ATP-binding export protein CcmA of Yersinia pestis.